Consider the following 403-residue polypeptide: Phosphoglycerate kinase (403 aa).

Substrate is bound by residues 21–23 (DFN), arginine 36, 59–62 (HLGR), arginine 119, and arginine 154. ATP is bound by residues lysine 207, glycine 299, glutamate 330, and 357–360 (GGDA).

Belongs to the phosphoglycerate kinase family. In terms of assembly, monomer.

The protein localises to the cytoplasm. The catalysed reaction is (2R)-3-phosphoglycerate + ATP = (2R)-3-phospho-glyceroyl phosphate + ADP. Its pathway is carbohydrate degradation; glycolysis; pyruvate from D-glyceraldehyde 3-phosphate: step 2/5. This chain is Phosphoglycerate kinase, found in Chlamydia trachomatis serovar L2 (strain ATCC VR-902B / DSM 19102 / 434/Bu).